The sequence spans 391 residues: Tryptophan synthase beta chain (391 aa).

Lys-84 bears the N6-(pyridoxal phosphate)lysine mark.

The protein belongs to the TrpB family. Tetramer of two alpha and two beta chains. The cofactor is pyridoxal 5'-phosphate.

The catalysed reaction is (1S,2R)-1-C-(indol-3-yl)glycerol 3-phosphate + L-serine = D-glyceraldehyde 3-phosphate + L-tryptophan + H2O. Its pathway is amino-acid biosynthesis; L-tryptophan biosynthesis; L-tryptophan from chorismate: step 5/5. The beta subunit is responsible for the synthesis of L-tryptophan from indole and L-serine. The protein is Tryptophan synthase beta chain of Thermoanaerobacter pseudethanolicus (strain ATCC 33223 / 39E) (Clostridium thermohydrosulfuricum).